A 214-amino-acid polypeptide reads, in one-letter code: Acetoin utilization protein AcuB (214 aa).

CBS domains are found at residues 7 to 66 and 78 to 135; these read MKRD…ENKR and MKKD…GADQ.

Interacts with YabA.

Its pathway is ketone degradation; acetoin degradation. Role in growth and sporulation on acetoin or butanediol. Involved in the breakdown of these compounds used as a carbon source. This Bacillus subtilis (strain 168) protein is Acetoin utilization protein AcuB (acuB).